The chain runs to 182 residues: ATP synthase subunit delta (182 aa).

It belongs to the ATPase delta chain family. As to quaternary structure, F-type ATPases have 2 components, F(1) - the catalytic core - and F(0) - the membrane proton channel. F(1) has five subunits: alpha(3), beta(3), gamma(1), delta(1), epsilon(1). CF(0) has four main subunits: a(1), b(1), b'(1) and c(10-14). The alpha and beta chains form an alternating ring which encloses part of the gamma chain. F(1) is attached to F(0) by a central stalk formed by the gamma and epsilon chains, while a peripheral stalk is formed by the delta, b and b' chains.

It localises to the cellular thylakoid membrane. Functionally, f(1)F(0) ATP synthase produces ATP from ADP in the presence of a proton or sodium gradient. F-type ATPases consist of two structural domains, F(1) containing the extramembraneous catalytic core and F(0) containing the membrane proton channel, linked together by a central stalk and a peripheral stalk. During catalysis, ATP synthesis in the catalytic domain of F(1) is coupled via a rotary mechanism of the central stalk subunits to proton translocation. Its function is as follows. This protein is part of the stalk that links CF(0) to CF(1). It either transmits conformational changes from CF(0) to CF(1) or is implicated in proton conduction. This is ATP synthase subunit delta from Prochlorococcus marinus (strain MIT 9303).